Reading from the N-terminus, the 325-residue chain is Large ribosomal subunit protein uL1m (325 aa).

The transit peptide at 1-50 directs the protein to the mitochondrion; sequence MAATVRCFGRVLIHHQRCSLATVTSQTSLYPCCIYVPVPNRHFAAAAKPA. Positions 47–66 are disordered; that stretch reads AKPAKKTKKGTKEKASNEKK. Residues 56 to 66 show a composition bias toward basic and acidic residues; that stretch reads GTKEKASNEKK.

It belongs to the universal ribosomal protein uL1 family.

It is found in the mitochondrion. The sequence is that of Large ribosomal subunit protein uL1m (MRPL1) from Bos taurus (Bovine).